The chain runs to 348 residues: Rhodopsin (348 aa).

Residue Met1 is modified to N-acetylmethionine. The Extracellular portion of the chain corresponds to 1 to 36 (MNGTEGPNFYVPFSNATGVVRSPFEYPQYYLAEPWQ). 2 N-linked (GlcNAc...) asparagine glycosylation sites follow: Asn2 and Asn15. A helical transmembrane segment spans residues 37-61 (FSMLAAYMFLLIVLGFPINFLTLYV). Residues 62 to 73 (TVQHKKLRTPLN) are Cytoplasmic-facing. Residues 74 to 96 (YILLNLAVADLFMVLGGFTSTLY) form a helical membrane-spanning segment. Over 97–110 (TSLHGYFVFGPTGC) the chain is Extracellular. Residues Cys110 and Cys187 are joined by a disulfide bond. Residues 111–133 (NLEGFFATLGGEIALWSLVVLAI) traverse the membrane as a helical segment. A 'Ionic lock' involved in activated form stabilization motif is present at residues 134–136 (ERY). The Cytoplasmic portion of the chain corresponds to 134-152 (ERYVVVCKPMSNFRFGENH). Residues 153–173 (AIMGVAFTWVMALACAAPPLA) form a helical membrane-spanning segment. The Extracellular portion of the chain corresponds to 174–202 (GWSRYIPEGLQCSCGIDYYTLKPEVNNES). Position 201 (Glu201) interacts with Zn(2+). The helical transmembrane segment at 203–224 (FVIYMFVVHFTIPMIIIFFCYG) threads the bilayer. Topologically, residues 225–252 (QLVFTVKEAAAQQQESATTQKAEKEVTR) are cytoplasmic. Residues 253–274 (MVIIMVIAFLICWVPYASVAFY) form a helical membrane-spanning segment. Residues 275 to 284 (IFTHQGSNFG) lie on the Extracellular side of the membrane. Gln279 contributes to the Zn(2+) binding site. The chain crosses the membrane as a helical span at residues 285-309 (PIFMTIPAFFAKSAAIYNPVIYIMM). Lys296 carries the N6-(retinylidene)lysine modification. Residues 310-348 (NKQFRNCMLTTICCGKNPLGDDEASATVSKTETSQVAPA) lie on the Cytoplasmic side of the membrane. S-palmitoyl cysteine attachment occurs at residues Cys322 and Cys323. Positions 330-348 (DDEASATVSKTETSQVAPA) are interaction with SAG. Residue Ser334 is modified to Phosphoserine. Thr336 is subject to Phosphothreonine. At Ser338 the chain carries Phosphoserine. Thr340 and Thr342 each carry phosphothreonine. A Phosphoserine modification is found at Ser343.

This sequence belongs to the G-protein coupled receptor 1 family. Opsin subfamily. In terms of assembly, homodimer. May form a complex composed of RHO, GRK1 and RCVRN in a Ca(2+)-dependent manner; RCVRN prevents the interaction between GRK1 and RHO. Interacts with GRK1. Interacts (phosphorylated form) with SAG. Interacts with GNAT1. Interacts with GNAT3. SAG and G-proteins compete for a common binding site. Interacts with PRCD; the interaction promotes PRCD stability. Forms a complex with ASAP1 and ARF4. Forms a complex with ASAP1, RAB11A, Rabin8/RAB3IP, ARF4 and RAB11FIP3; the complex regulates Golgi-to-cilia rhodopsin/RHO transport in photoreceptors. Phosphorylated on some or all of the serine and threonine residues present in the C-terminal region. After activation by light, phosphorylated by GRK1 (in vitro). Post-translationally, contains one covalently linked retinal chromophore. Upon light absorption, the covalently bound 11-cis-retinal is converted to all-trans-retinal. After hydrolysis of the Schiff base and release of the covalently bound all-trans-retinal, active rhodopsin is regenerated by binding of a fresh molecule of 11-cis-retinal. In terms of tissue distribution, rod shaped photoreceptor cells which mediate vision in dim light.

The protein localises to the membrane. It is found in the cell projection. The protein resides in the cilium. It localises to the photoreceptor outer segment. Functionally, photoreceptor required for image-forming vision at low light intensity. Required for photoreceptor cell viability after birth. Light-induced isomerization of the chromophore 11-cis-retinal to all-trans-retinal triggers a conformational change that activates signaling via G-proteins. Subsequent receptor phosphorylation mediates displacement of the bound G-protein alpha subunit by the arrestin SAG and terminates signaling. The polypeptide is Rhodopsin (RHO) (Homo sapiens (Human)).